The following is a 201-amino-acid chain: Akirin-2 (201 aa).

Phosphoserine is present on residues Ser-18 and Ser-21. Positions 22–27 (PKRRRC) match the Nuclear localization signal motif. The residue at position 55 (Ser-55) is a Phosphoserine. The short motif at 198-201 (SYVS) is the SYVS motif element.

The protein belongs to the akirin family. In terms of assembly, homodimer. Interacts with IPO9; the interaction is direct. Associates with 20S and 26S proteasomes. Interacts with SMARCD1; promoting SWI/SNF complex recruitment. Interacts with NFKBIZ. Interacts with YWHAB. Polyubiquitinated. Polyubiquitination is dependent of UBR5 that extends pre-ubiquitinated AKIRIN2. Highly expressed in testis, cerebrum and cerebellum, and barely detectable in liver, heart, spleen and muscle. Also highly expressed in various tumor cells from hepatoma, glioblastoma and pheochromocytoma.

It is found in the nucleus. It localises to the cytoplasm. The protein resides in the membrane. In terms of biological role, molecular adapter that acts as a bridge between a variety of multiprotein complexes, and which is involved in embryonic development, immunity, myogenesis and brain development. Plays a key role in nuclear protein degradation by promoting import of proteasomes into the nucleus: directly binds to fully assembled 20S proteasomes at one end and to nuclear import receptor IPO9 at the other end, bridging them together and mediating the import of pre-assembled proteasome complexes through the nuclear pore. Involved in innate immunity by regulating the production of interleukin-6 (IL6) downstream of Toll-like receptor (TLR): acts by bridging the NF-kappa-B inhibitor NFKBIZ and the SWI/SNF complex, leading to promote induction of IL6. Also involved in adaptive immunity by promoting B-cell activation. Involved in brain development: required for the survival and proliferation of cerebral cortical progenitor cells. Involved in myogenesis: required for skeletal muscle formation and skeletal development, possibly by regulating expression of muscle differentiation factors. Also plays a role in facilitating interdigital tissue regression during limb development. The sequence is that of Akirin-2 from Rattus norvegicus (Rat).